The primary structure comprises 374 residues: Protein dip1 (374 aa).

This sequence belongs to the LDB17 family.

The protein resides in the cytoplasm. It is found in the nucleus. The protein localises to the cell tip. May be involved in protein-linked oligosaccharide phosphorylation. In Schizosaccharomyces pombe (strain 972 / ATCC 24843) (Fission yeast), this protein is Protein dip1 (dip1).